The primary structure comprises 418 residues: BTB and MATH domain-containing protein 41 (418 aa).

The disordered stretch occupies residues 1–33; sequence MEINNGAQPENAAVSIPSRSPSGKSEKRKSPSI. The region spanning 45–173 is the MATH domain; that stretch reads SFTNYWSVER…NDILTIGCEL (129 aa). The region spanning 232–293 is the BTB domain; sequence SDFIIVASCG…TLDVLLRHMY (62 aa).

Interacts with cul-3.

The protein operates within protein modification; protein ubiquitination. Probable substrate-specific adapter of an E3 ubiquitin-protein ligase complex which mediates the ubiquitination and subsequent proteasomal degradation of target proteins. The sequence is that of BTB and MATH domain-containing protein 41 (bath-41) from Caenorhabditis elegans.